The sequence spans 420 residues: Histidine--tRNA ligase (420 aa).

It belongs to the class-II aminoacyl-tRNA synthetase family. As to quaternary structure, homodimer.

It localises to the cytoplasm. It carries out the reaction tRNA(His) + L-histidine + ATP = L-histidyl-tRNA(His) + AMP + diphosphate + H(+). This is Histidine--tRNA ligase from Macrococcus caseolyticus (strain JCSC5402) (Macrococcoides caseolyticum).